Consider the following 340-residue polypeptide: Glycerol-3-phosphate dehydrogenase [NAD(P)+] (340 aa).

The NADPH site is built by Ser13, Tyr14, and Lys108. 3 residues coordinate sn-glycerol 3-phosphate: Lys108, Gly137, and Thr139. Residue Ala141 participates in NADPH binding. Sn-glycerol 3-phosphate-binding residues include Lys193, Asp246, Ser256, Arg257, and Asn258. Lys193 functions as the Proton acceptor in the catalytic mechanism. Arg257 contributes to the NADPH binding site. Ile281 and Glu283 together coordinate NADPH.

Belongs to the NAD-dependent glycerol-3-phosphate dehydrogenase family.

Its subcellular location is the cytoplasm. The catalysed reaction is sn-glycerol 3-phosphate + NAD(+) = dihydroxyacetone phosphate + NADH + H(+). It catalyses the reaction sn-glycerol 3-phosphate + NADP(+) = dihydroxyacetone phosphate + NADPH + H(+). Its pathway is membrane lipid metabolism; glycerophospholipid metabolism. In terms of biological role, catalyzes the reduction of the glycolytic intermediate dihydroxyacetone phosphate (DHAP) to sn-glycerol 3-phosphate (G3P), the key precursor for phospholipid synthesis. This Bartonella quintana (strain Toulouse) (Rochalimaea quintana) protein is Glycerol-3-phosphate dehydrogenase [NAD(P)+].